The following is a 334-amino-acid chain: Phosphate acyltransferase (334 aa).

This sequence belongs to the PlsX family. In terms of assembly, homodimer. Probably interacts with PlsY.

It localises to the cytoplasm. The catalysed reaction is a fatty acyl-[ACP] + phosphate = an acyl phosphate + holo-[ACP]. It participates in lipid metabolism; phospholipid metabolism. In terms of biological role, catalyzes the reversible formation of acyl-phosphate (acyl-PO(4)) from acyl-[acyl-carrier-protein] (acyl-ACP). This enzyme utilizes acyl-ACP as fatty acyl donor, but not acyl-CoA. This is Phosphate acyltransferase from Caldicellulosiruptor saccharolyticus (strain ATCC 43494 / DSM 8903 / Tp8T 6331).